A 216-amino-acid polypeptide reads, in one-letter code: Somatotropin (216 aa).

The signal sequence occupies residues 1-25; sequence MAPGSWFSPLFITVITLGLQWPQEA. Histidine 46 contacts Zn(2+). An intrachain disulfide couples cysteine 78 to cysteine 189. A Zn(2+)-binding site is contributed by glutamate 198. The cysteines at positions 206 and 214 are disulfide-linked.

Belongs to the somatotropin/prolactin family.

The protein localises to the secreted. Growth hormone plays an important role in growth control. This Anas platyrhynchos (Mallard) protein is Somatotropin (GH).